The sequence spans 302 residues: tRNA-cytidine(32) 2-sulfurtransferase (302 aa).

The PP-loop motif signature appears at 43–48 (SGGKDS). Residues Cys-118, Cys-121, and Cys-209 each contribute to the [4Fe-4S] cluster site.

This sequence belongs to the TtcA family. Homodimer. The cofactor is Mg(2+). It depends on [4Fe-4S] cluster as a cofactor.

The protein resides in the cytoplasm. It catalyses the reaction cytidine(32) in tRNA + S-sulfanyl-L-cysteinyl-[cysteine desulfurase] + AH2 + ATP = 2-thiocytidine(32) in tRNA + L-cysteinyl-[cysteine desulfurase] + A + AMP + diphosphate + H(+). Its pathway is tRNA modification. Its function is as follows. Catalyzes the ATP-dependent 2-thiolation of cytidine in position 32 of tRNA, to form 2-thiocytidine (s(2)C32). The sulfur atoms are provided by the cysteine/cysteine desulfurase (IscS) system. This chain is tRNA-cytidine(32) 2-sulfurtransferase, found in Polynucleobacter asymbioticus (strain DSM 18221 / CIP 109841 / QLW-P1DMWA-1) (Polynucleobacter necessarius subsp. asymbioticus).